Reading from the N-terminus, the 239-residue chain is Large ribosomal subunit protein uL2 (239 aa).

Disordered regions lie at residues 1–20 and 202–239; these read MGHR…YRAP and FGGG…RRKR.

Belongs to the universal ribosomal protein uL2 family. Part of the 50S ribosomal subunit. Forms a bridge to the 30S subunit in the 70S ribosome.

One of the primary rRNA binding proteins. Required for association of the 30S and 50S subunits to form the 70S ribosome, for tRNA binding and peptide bond formation. It has been suggested to have peptidyltransferase activity; this is somewhat controversial. Makes several contacts with the 16S rRNA in the 70S ribosome. This is Large ribosomal subunit protein uL2 from Methanosphaerula palustris (strain ATCC BAA-1556 / DSM 19958 / E1-9c).